Reading from the N-terminus, the 161-residue chain is Regulator of ribonuclease activity A (161 aa).

It belongs to the RraA family. As to quaternary structure, homotrimer. Binds to both RNA-binding sites in the C-terminal region of Rne and to RhlB.

It localises to the cytoplasm. In terms of biological role, globally modulates RNA abundance by binding to RNase E (Rne) and regulating its endonucleolytic activity. Can modulate Rne action in a substrate-dependent manner by altering the composition of the degradosome. Modulates RNA-binding and helicase activities of the degradosome. This Klebsiella pneumoniae (strain 342) protein is Regulator of ribonuclease activity A.